A 253-amino-acid chain; its full sequence is MRTPIIAGNWKMNKTVQEAKDFVNALPTLPDSKEVESVICAPAIQLDALTTAVKEGKAQGLEIGAQNTYFEDNGAFTGETSPVALADLGVKYVVIGHSERRELFHETDEEINKKAHAIFKHGMTPIICVGETDEERESGKANDVVGEQVKKAVAGLSEDQLKSVVIAYEPIWAIGTGKSSTSEDANEMCAFVRQTIADLSSKEVSEATRIQYGGSVKPNNIKEYMAQTDIDGALVGGASLKVEDFVQLLEGAK.

A substrate-binding site is contributed by 9–11 (NWK). Histidine 97 serves as the catalytic Electrophile. Glutamate 169 (proton acceptor) is an active-site residue. Residues glycine 175, serine 215, and 236–237 (GG) contribute to the substrate site.

It belongs to the triosephosphate isomerase family. In terms of assembly, homodimer.

The protein resides in the cytoplasm. It carries out the reaction D-glyceraldehyde 3-phosphate = dihydroxyacetone phosphate. It functions in the pathway carbohydrate biosynthesis; gluconeogenesis. Its pathway is carbohydrate degradation; glycolysis; D-glyceraldehyde 3-phosphate from glycerone phosphate: step 1/1. Involved in the gluconeogenesis. Catalyzes stereospecifically the conversion of dihydroxyacetone phosphate (DHAP) to D-glyceraldehyde-3-phosphate (G3P). The sequence is that of Triosephosphate isomerase from Staphylococcus aureus (strain Mu50 / ATCC 700699).